The primary structure comprises 865 residues: Leucine--tRNA ligase (865 aa).

Positions 44–54 (PYPSGRIHVGH) match the 'HIGH' region motif. The 'KMSKS' region signature appears at 625-629 (KMSKS). Residue Lys628 coordinates ATP.

Belongs to the class-I aminoacyl-tRNA synthetase family.

It is found in the cytoplasm. It catalyses the reaction tRNA(Leu) + L-leucine + ATP = L-leucyl-tRNA(Leu) + AMP + diphosphate. This is Leucine--tRNA ligase from Maricaulis maris (strain MCS10) (Caulobacter maris).